The following is a 349-amino-acid chain: Protein RAE1 (349 aa).

A disordered region spans residues 1-21; that stretch reads MATFGAPATANSNPNKSYEVT. At alanine 2 the chain carries N-acetylalanine. Positions 9 to 21 are enriched in polar residues; it reads TANSNPNKSYEVT. WD repeat units lie at residues 23-62, 70-109, 112-151, 153-190, and 244-283; these read SPADSISSLSFSPRADILVATSWDNQVRCWEISRSGASLA, SHDQPVLCSAWKDDGTTVFSGGCDKQAKMWPLLSGGQPVT, MHEGPIAAMAWIPGMNLLATGSWDKTLKYWDTRQQNPVHT, QLPDKCYTLSVKHPLMVVGTADRNLIVFNLQNPQTEFK, and NDIYSVNSLNFHPVHGTFATAGSDGAFNFWDKDSKQRLKA. The DWD box signature appears at 128-144; it reads LLATGSWDKTLKYWDTR.

Belongs to the WD repeat rae1 family. In terms of assembly, part of the nuclear pore complex (NPC). The NPC has an eight-fold symmetrical structure comprising a central transport channel and two rings, the cytoplasmic and nuclear rings, to which eight filaments are attached. The cytoplasmic filaments have loose ends, while the nuclear filaments are joined in a distal ring, forming a nuclear basket. NPCs are highly dynamic in configuration and composition, and can be devided in 3 subcomplexes, the NUP62 subcomplex, the NUP107-160 subcomplex and the NUP93 subcomplex, containing approximately 30 different nucleoporin proteins. Interacts with DDB1A.

Its subcellular location is the nucleus envelope. The protein resides in the nucleus. The protein localises to the nuclear pore complex. This is Protein RAE1 from Arabidopsis thaliana (Mouse-ear cress).